The sequence spans 525 residues: Beta-1,4-xylosyltransferase IRX14 (525 aa).

Over methionine 1–leucine 35 the chain is Cytoplasmic. The helical; Signal-anchor for type II membrane protein transmembrane segment at isoleucine 36–phenylalanine 56 threads the bilayer. At arginine 57–asparagine 525 the chain is on the lumenal side. Residues asparagine 102, asparagine 204, and asparagine 326 are each glycosylated (N-linked (GlcNAc...) asparagine). A disordered region spans residues arginine 452–asparagine 525. Residues proline 471–proline 488 show a composition bias toward polar residues. A compositionally biased stretch (basic residues) spans threonine 489–histidine 503. The span at threonine 508–serine 519 shows a compositional bias: polar residues.

This sequence belongs to the glycosyltransferase 43 family. In terms of tissue distribution, expressed in developing interfascicular fibers and xylem cells in stems and developing secondary xylem in roots.

It is found in the golgi apparatus membrane. It carries out the reaction [(1-&gt;4)-beta-D-xylan](n) + UDP-alpha-D-xylose = [(1-&gt;4)-beta-D-xylan](n+1) + UDP + H(+). Functionally, involved in the synthesis of the hemicellulose glucuronoxylan, a major component of secondary cell walls. Involved in the elongation of glucuronoxylan xylosyl backbone. Xylan xylosyltransferase that acts cooperatively with IRX9 to achieve the successive addition of xylosyl residues during xylan backbone elongation. Required for the proper composition and structural properties of released seed coat mucilage. Required for the production of highly branched xylan polymers in seed coat mucilage. Xylan with xylose side chains seems to be necessary for pectin attachment to the seed surface. Together with MUCI70, required for xylan and pectin synthesis in seed coat epidermal (SCE) cells. The protein is Beta-1,4-xylosyltransferase IRX14 of Arabidopsis thaliana (Mouse-ear cress).